The chain runs to 337 residues: tRNA N6-adenosine threonylcarbamoyltransferase (337 aa).

His111 and His115 together coordinate Fe cation. Residues Leu134–Gly138, Asp167, Gly180, and Asn272 each bind substrate. Fe cation is bound at residue Asp300.

Belongs to the KAE1 / TsaD family. The cofactor is Fe(2+).

It is found in the cytoplasm. It catalyses the reaction L-threonylcarbamoyladenylate + adenosine(37) in tRNA = N(6)-L-threonylcarbamoyladenosine(37) in tRNA + AMP + H(+). In terms of biological role, required for the formation of a threonylcarbamoyl group on adenosine at position 37 (t(6)A37) in tRNAs that read codons beginning with adenine. Is involved in the transfer of the threonylcarbamoyl moiety of threonylcarbamoyl-AMP (TC-AMP) to the N6 group of A37, together with TsaE and TsaB. TsaD likely plays a direct catalytic role in this reaction. This chain is tRNA N6-adenosine threonylcarbamoyltransferase, found in Salmonella choleraesuis (strain SC-B67).